An 888-amino-acid chain; its full sequence is Molybdenum cofactor sulfurase (888 aa).

A Phosphoserine modification is found at Ser-34. Position 264 is an N6-(pyridoxal phosphate)lysine (Lys-264). Residue Cys-424 is part of the active site. Phosphoserine occurs at positions 528 and 530. The MOSC domain maps to 706 to 867; it reads KQSSNSQRNA…LSVGSQVLPV (162 aa).

The protein belongs to the class-V pyridoxal-phosphate-dependent aminotransferase family. MOCOS subfamily. Pyridoxal 5'-phosphate is required as a cofactor.

The catalysed reaction is Mo-molybdopterin + L-cysteine + AH2 = thio-Mo-molybdopterin + L-alanine + A + H2O. Its pathway is cofactor biosynthesis; molybdopterin biosynthesis. Functionally, sulfurates the molybdenum cofactor. Sulfation of molybdenum is essential for xanthine dehydrogenase (XDH) and aldehyde oxidase (ADO) enzymes in which molybdenum cofactor is liganded by 1 oxygen and 1 sulfur atom in active form. In vitro, the C-terminal domain is able to reduce N-hydroxylated prodrugs, such as benzamidoxime. The protein is Molybdenum cofactor sulfurase of Homo sapiens (Human).